The sequence spans 281 residues: Microtubule-associated protein RP/EB family member 3 (281 aa).

The region spanning 14 to 116 (NLSRHDMLAW…FIQWFKKFFD (103 aa)) is the Calponin-homology (CH) domain. Disordered regions lie at residues 157–181 (VPQR…VAPP) and 260–281 (EGFA…QDEY). Positions 158–175 (PQRTSPTGPKNMQTSGRL) are enriched in polar residues. Phosphoserine occurs at positions 162 and 176. Residues 194 to 264 (GGHEADAQIL…LYATEEGFAP (71 aa)) form the EB1 C-terminal domain. Positions 217 to 260 (DGLEKERDFYFSKLRDIELICQEHESENSPVISGIIGILYATEE) are APC-binding. A DCTN1-binding region spans residues 217 to 281 (DGLEKERDFY…EHQQEDQDEY (65 aa)). Over residues 272–281 (EHQQEDQDEY) the composition is skewed to basic and acidic residues.

The protein belongs to the MAPRE family. Homodimer. Heterodimer with MAPRE1. Binds monomeric and polymerized GTP-bound tubulin. Interacts with DCTN1 and SRCIN1. Binds to the C-terminal domain of APC. Interacts (via C-terminus) with CLIP1. Interacts with SLAIN2. Interacts with SLAIN1. Interacts with APC2. Interacts with AKAP9. Interacts with PDE4DIP isoform 2/MMG8/SMYLE; this interaction is required for its recruitment to the Golgi apparatus.

Its subcellular location is the cytoplasm. It localises to the cytoskeleton. Functionally, plus-end tracking protein (+TIP) that binds to the plus-end of microtubules and regulates the dynamics of the microtubule cytoskeleton. Promotes microtubule growth. May be involved in spindle function by stabilizing microtubules and anchoring them at centrosomes. Also acts as a regulator of minus-end microtubule organization: interacts with the complex formed by AKAP9 and PDE4DIP, leading to recruit CAMSAP2 to the Golgi apparatus, thereby tethering non-centrosomal minus-end microtubules to the Golgi, an important step for polarized cell movement. Promotes elongation of CAMSAP2-decorated microtubule stretches on the minus-end of microtubules. In Mus musculus (Mouse), this protein is Microtubule-associated protein RP/EB family member 3 (Mapre3).